The primary structure comprises 813 residues: Protein PPP4R3C1 (813 aa).

The segment at 730 to 813 (NESESAIEGQ…PPPKRPNLST (84 aa)) is disordered. Residues 777 to 788 (YDTDDENDDDPY) show a composition bias toward acidic residues.

It belongs to the SMEK family.

The protein is Protein PPP4R3C1 of Mus musculus (Mouse).